Reading from the N-terminus, the 21-residue chain is Fibrinogen beta chain (21 aa).

Gln-1 is subject to Pyrrolidone carboxylic acid. A compositionally biased stretch (acidic residues) spans 1 to 11 (QFPTDYDEGED). A disordered region spans residues 1-21 (QFPTDYDEGEDDRPKSGLGAR). O-linked (GalNAc...) threonine glycosylation is present at Thr-4. Position 6 is a sulfotyrosine (Tyr-6).

Heterohexamer; disulfide linked. Contains 2 sets of 3 non-identical chains (alpha, beta and gamma). The 2 heterotrimers are in head to head conformation with the N-termini in a small central domain. Conversion of fibrinogen to fibrin is triggered by thrombin, which cleaves fibrinopeptides A and B from alpha and beta chains, and thus exposes the N-terminal polymerization sites responsible for the formation of the soft clot.

The protein localises to the secreted. In terms of biological role, cleaved by the protease thrombin to yield monomers which, together with fibrinogen alpha (FGA) and fibrinogen gamma (FGG), polymerize to form an insoluble fibrin matrix. Fibrin has a major function in hemostasis as one of the primary components of blood clots. In addition, functions during the early stages of wound repair to stabilize the lesion and guide cell migration during re-epithelialization. Was originally thought to be essential for platelet aggregation, based on in vitro studies using anticoagulated blood. However subsequent studies have shown that it is not absolutely required for thrombus formation in vivo. Enhances expression of SELP in activated platelets. Maternal fibrinogen is essential for successful pregnancy. Fibrin deposition is also associated with infection, where it protects against IFNG-mediated hemorrhage. May also facilitate the antibacterial immune response via both innate and T-cell mediated pathways. The polypeptide is Fibrinogen beta chain (FGB) (Syncerus caffer (African buffalo)).